We begin with the raw amino-acid sequence, 365 residues long: Peptide chain release factor 2 (365 aa).

An N5-methylglutamine modification is found at glutamine 251.

The protein belongs to the prokaryotic/mitochondrial release factor family. In terms of processing, methylated by PrmC. Methylation increases the termination efficiency of RF2.

It localises to the cytoplasm. In terms of biological role, peptide chain release factor 2 directs the termination of translation in response to the peptide chain termination codons UGA and UAA. This Campylobacter jejuni subsp. jejuni serotype O:6 (strain 81116 / NCTC 11828) protein is Peptide chain release factor 2.